Reading from the N-terminus, the 1177-residue chain is MDEEGAPLSESVQVVDPDVRAHVYSLVTALGGFNGESADRYVLGDDALACLRDIKRWLKLYDEKNNRMDVARCLGEANLVNGDLLPILTLWSTSGQKSKHMSRIALACLELLVPLTWPLEVPSKMTVNHHRHTPYLQQAQVLYKRGILSHGSDSILRTIIRIGLPSMAVPRSERTTRDEGILKLMLYFLRNIAVISPNARLAAEGDEEETSRSATINAFQNQDAFALLLTMCSNVGEDFSLQDVVLLEILFHIVKGVNVEKLFMNDAQRKAKRTDELGELLQKESSLRREYAKNAPTRHGRFGTMIWVKRDDAKVSTVSGQDVLKDSQTTLHKMDQSKKWNKPQIRRRAAEVTANNDFNTPVNLNSTATKNLRMFVEEFLDSGFNPLFTHVRKAIEREADRVLDINTRQFFYTVAWFLEAERVRRAHQREKRHLGDKSLNEIEPDSFALVASVLNQETFVFLNRSMQYSYDNKDVEDLTAEMRCFTQILLTVQEMAQSPLEEDQEIADNIQNRIFYEETTHDRIIAIVRGYKDQGFGYLDACTELAHVFLKMLEHYSKENVDMHIRSRRRAKRKAKQAKQADIEGDDEEQASEEEDLMDAERISKERKFDFKRFAAKFCNQSCVDTFIAFTKYYKELNVDQLKRAHRYFYRIAFKQEMSVLLFRLDIINLFYRMIKGPGALDSNKPIFKEWEELVRQIIRRMVKKIDQRPALITELLFSKINSTVFYLEYGHEKQTISASKRPPAELEVDPREAKTTDEKIKIVVHVMVKDEHTDLVKWVSDVLNSAADEREAWESQEQHSEGQKAPNPMIPVKSNNESCQKAMFSNAKLRLLMTLVRFERLGMEDVPGASWIVPSSLTSQDLRHTRSMIEQCLTEPVTESSDRDLSQLIRRKSGNNTRRDRDDQTADVDFGSDSEGDDNVPDGPLFPPNPRSRASALEQLKKQRKKRRKQAGEEEEPDEEDLEGRRRARLENALARQAKIKSDLYIHASDEQTDEEADQEFFRLEEQRRKEQAERIRKALLHGVVEEASENSRKKGSGRKRQSDQHTASTADSQSKRQRRQQRTGGLDDDDDLVMTGTDARSPDSLGQGSPSLQGANDVEDTPVTSEENELDFDDDLAFSRNRNRDKVLSAENDDSDTEPPAPDTIDEDDDDEAAPVAAPPRRRMRAGFVIESDSE.

4 disordered regions span residues 575–597 (AKQA…EEDL), 791–815 (REAW…PVKS), 874–1001 (LTEP…ADQE), and 1021–1177 (LLHG…SDSE). Residues 583 to 597 (IEGDDEEQASEEEDL) show a composition bias toward acidic residues. The segment covering 791–803 (REAWESQEQHSEG) has biased composition (basic and acidic residues). Composition is skewed to acidic residues over residues 911 to 921 (FGSDSEGDDNV) and 954 to 963 (EEEEPDEEDL). Residues 981-991 (IKSDLYIHASD) show a composition bias toward basic and acidic residues. Polar residues predominate over residues 1086–1096 (SLGQGSPSLQG). Acidic residues-rich tracts occupy residues 1108 to 1118 (EENELDFDDDL) and 1146 to 1155 (TIDEDDDDEA).

This sequence belongs to the timeless family. Component of the fork protection complex (FPC) consisting of tof1 and csm3.

It localises to the nucleus. In terms of biological role, forms a fork protection complex (FPC) with csm3 and which is required for chromosome segregation during meiosis and DNA damage repair. FPC coordinates leading and lagging strand synthesis and moves with the replication fork. FPC stabilizes replication forks in a configuration that is recognized by replication checkpoint sensors. This is Topoisomerase 1-associated factor 1 (tof1) from Neosartorya fischeri (strain ATCC 1020 / DSM 3700 / CBS 544.65 / FGSC A1164 / JCM 1740 / NRRL 181 / WB 181) (Aspergillus fischerianus).